The chain runs to 313 residues: 4-hydroxy-3-methylbut-2-enyl diphosphate reductase (313 aa).

C12 is a binding site for [4Fe-4S] cluster. H41 and H74 together coordinate (2E)-4-hydroxy-3-methylbut-2-enyl diphosphate. Dimethylallyl diphosphate is bound by residues H41 and H74. 2 residues coordinate isopentenyl diphosphate: H41 and H74. C96 contributes to the [4Fe-4S] cluster binding site. H124 lines the (2E)-4-hydroxy-3-methylbut-2-enyl diphosphate pocket. H124 contacts dimethylallyl diphosphate. H124 contacts isopentenyl diphosphate. The Proton donor role is filled by E126. T167 contacts (2E)-4-hydroxy-3-methylbut-2-enyl diphosphate. C197 contributes to the [4Fe-4S] cluster binding site. Positions 225, 226, 227, and 269 each coordinate (2E)-4-hydroxy-3-methylbut-2-enyl diphosphate. 4 residues coordinate dimethylallyl diphosphate: S225, S226, N227, and S269. S225, S226, N227, and S269 together coordinate isopentenyl diphosphate.

The protein belongs to the IspH family. The cofactor is [4Fe-4S] cluster.

The enzyme catalyses isopentenyl diphosphate + 2 oxidized [2Fe-2S]-[ferredoxin] + H2O = (2E)-4-hydroxy-3-methylbut-2-enyl diphosphate + 2 reduced [2Fe-2S]-[ferredoxin] + 2 H(+). The catalysed reaction is dimethylallyl diphosphate + 2 oxidized [2Fe-2S]-[ferredoxin] + H2O = (2E)-4-hydroxy-3-methylbut-2-enyl diphosphate + 2 reduced [2Fe-2S]-[ferredoxin] + 2 H(+). It functions in the pathway isoprenoid biosynthesis; dimethylallyl diphosphate biosynthesis; dimethylallyl diphosphate from (2E)-4-hydroxy-3-methylbutenyl diphosphate: step 1/1. It participates in isoprenoid biosynthesis; isopentenyl diphosphate biosynthesis via DXP pathway; isopentenyl diphosphate from 1-deoxy-D-xylulose 5-phosphate: step 6/6. In terms of biological role, catalyzes the conversion of 1-hydroxy-2-methyl-2-(E)-butenyl 4-diphosphate (HMBPP) into a mixture of isopentenyl diphosphate (IPP) and dimethylallyl diphosphate (DMAPP). Acts in the terminal step of the DOXP/MEP pathway for isoprenoid precursor biosynthesis. The protein is 4-hydroxy-3-methylbut-2-enyl diphosphate reductase of Methylococcus capsulatus (strain ATCC 33009 / NCIMB 11132 / Bath).